Consider the following 89-residue polypeptide: UPF0473 protein Helmi_02360 (89 aa).

It belongs to the UPF0473 family.

This Heliobacterium modesticaldum (strain ATCC 51547 / Ice1) protein is UPF0473 protein Helmi_02360.